The chain runs to 286 residues: Pyridoxal kinase PdxY (286 aa).

Substrate is bound by residues Ser9 and 44–45; that span reads TQ. ATP-binding positions include Asp111, Ala143, Glu148, Lys181, and 208 to 211; that span reads RPLV. Asp223 provides a ligand contact to substrate.

It belongs to the pyridoxine kinase family. PdxY subfamily. Homodimer. Requires Mg(2+) as cofactor.

The enzyme catalyses pyridoxal + ATP = pyridoxal 5'-phosphate + ADP + H(+). The protein operates within cofactor metabolism; pyridoxal 5'-phosphate salvage; pyridoxal 5'-phosphate from pyridoxal: step 1/1. Its function is as follows. Pyridoxal kinase involved in the salvage pathway of pyridoxal 5'-phosphate (PLP). Catalyzes the phosphorylation of pyridoxal to PLP. The sequence is that of Pyridoxal kinase PdxY from Yersinia pseudotuberculosis serotype I (strain IP32953).